The primary structure comprises 353 residues: tRNA-specific 2-thiouridylase MnmA (353 aa).

ATP contacts are provided by residues 7-14 (GLSGGVDS) and Leu33. The active-site Nucleophile is the Cys94. Cys94 and Cys193 form a disulfide bridge. ATP is bound at residue Gly119. Positions 143–145 (KDQ) are interaction with tRNA. The active-site Cysteine persulfide intermediate is the Cys193. Residues 298–299 (RY) form an interaction with tRNA region.

This sequence belongs to the MnmA/TRMU family.

The protein resides in the cytoplasm. The catalysed reaction is S-sulfanyl-L-cysteinyl-[protein] + uridine(34) in tRNA + AH2 + ATP = 2-thiouridine(34) in tRNA + L-cysteinyl-[protein] + A + AMP + diphosphate + H(+). Functionally, catalyzes the 2-thiolation of uridine at the wobble position (U34) of tRNA, leading to the formation of s(2)U34. The polypeptide is tRNA-specific 2-thiouridylase MnmA (Picosynechococcus sp. (strain ATCC 27264 / PCC 7002 / PR-6) (Agmenellum quadruplicatum)).